The sequence spans 84 residues: UPF0457 protein BT9727_3043 (84 aa).

Belongs to the UPF0457 family.

In Bacillus thuringiensis subsp. konkukian (strain 97-27), this protein is UPF0457 protein BT9727_3043.